Here is a 278-residue protein sequence, read N- to C-terminus: 4-deoxy-L-threo-5-hexosulose-uronate ketol-isomerase (278 aa).

Positions 196, 198, 203, and 245 each coordinate Zn(2+).

This sequence belongs to the KduI family. Homohexamer. Zn(2+) is required as a cofactor.

The enzyme catalyses 5-dehydro-4-deoxy-D-glucuronate = 3-deoxy-D-glycero-2,5-hexodiulosonate. Its pathway is glycan metabolism; pectin degradation; 2-dehydro-3-deoxy-D-gluconate from pectin: step 4/5. Catalyzes the isomerization of 5-dehydro-4-deoxy-D-glucuronate to 3-deoxy-D-glycero-2,5-hexodiulosonate. In Escherichia coli (strain SMS-3-5 / SECEC), this protein is 4-deoxy-L-threo-5-hexosulose-uronate ketol-isomerase.